We begin with the raw amino-acid sequence, 646 residues long: Lipoteichoic acid synthase (646 aa).

The Cytoplasmic portion of the chain corresponds to 1-7 (MSLPKKK). Residues 8–28 (IGIFAFFLLTVFTITLKTYFS) form a helical membrane-spanning segment. The Extracellular segment spans residues 29–43 (YYVDFSLGVKGLVQN). Residues 44-64 (LILLMNPYSLIALVLSVFLFF) form a helical membrane-spanning segment. At 65-68 (KGKK) the chain is on the cytoplasmic side. The helical transmembrane segment at 69–89 (AFWFIFIGGFLLTFLLYANVV) threads the bilayer. The Extracellular segment spans residues 90–119 (YFRFFSDFLTFSTLNQAGNVESMGGAVSAS). The chain crosses the membrane as a helical span at residues 120–140 (FKWYDFVYFIDTIIYLAILIF). Over 141 to 153 (KRKWLDNRAFSKK) the chain is Cytoplasmic. A helical transmembrane segment spans residues 154-174 (FVPVVMATSVALFFLNLAFAE). At 175-646 (TDRPELLTRT…KSGPKGNEKK (472 aa)) the chain is on the extracellular side. Glu-255 and Thr-300 together coordinate Mn(2+). Thr-300 is an active-site residue. His-416 provides a ligand contact to substrate. Asp-475 and His-476 together coordinate Mn(2+).

This sequence belongs to the LTA synthase family. Post-translationally, proteolytically cleaved.

Its subcellular location is the cell membrane. It is found in the secreted. It functions in the pathway cell wall biogenesis; lipoteichoic acid biosynthesis. Its function is as follows. Catalyzes the polymerization of lipoteichoic acid (LTA) polyglycerol phosphate, a reaction that presumably uses phosphatidylglycerol (PG) as substrate. Is required for staphylococcal growth and cell division process. The sequence is that of Lipoteichoic acid synthase (ltaS) from Staphylococcus epidermidis (strain ATCC 35984 / DSM 28319 / BCRC 17069 / CCUG 31568 / BM 3577 / RP62A).